The chain runs to 435 residues: Glutamyl-tRNA reductase (435 aa).

Substrate-binding positions include T49 to R52, S114, E119 to Q121, and Q125. C50 acts as the Nucleophile in catalysis. Residue G204–I209 participates in NADP(+) binding.

Belongs to the glutamyl-tRNA reductase family. Homodimer.

It catalyses the reaction (S)-4-amino-5-oxopentanoate + tRNA(Glu) + NADP(+) = L-glutamyl-tRNA(Glu) + NADPH + H(+). It participates in porphyrin-containing compound metabolism; protoporphyrin-IX biosynthesis; 5-aminolevulinate from L-glutamyl-tRNA(Glu): step 1/2. Catalyzes the NADPH-dependent reduction of glutamyl-tRNA(Glu) to glutamate 1-semialdehyde (GSA). In Actinobacillus succinogenes (strain ATCC 55618 / DSM 22257 / CCUG 43843 / 130Z), this protein is Glutamyl-tRNA reductase.